We begin with the raw amino-acid sequence, 115 residues long: T cell receptor delta variable 2 (115 aa).

An N-terminal signal peptide occupies residues 1–19; that stretch reads MQRISSLIHLSLFWAGVMS. Residues 25–115 form the Ig-like domain; sequence PEHQTVPVSI…EGSYYCACDT (91 aa). A disulfide bridge connects residues C42 and C111.

In terms of assembly, gamma-delta TR is a heterodimer composed of a gamma and delta chain; disulfide-linked. The gamma-delta TR is associated with the transmembrane signaling CD3 coreceptor proteins following the stoichiometry: a single gamma-delta TR heterodimer associates with one CD3D-CD3E heterodimer, one CD3G-CD3E heterodimer and one CD247 homodimer forming a stable octameric structure. Upon activation, gamma-delta TR complex associates with FCER1G to initiate intracellular signaling.

Its subcellular location is the cell membrane. V region of the variable domain of T cell receptor (TR) delta chain that participates in the antigen recognition. Gamma-delta TRs recognize a variety of self and foreign non-peptide antigens frequently expressed at the epithelial boundaries between the host and external environment, including endogenous lipids presented by MH-like protein CD1D and phosphoantigens presented by butyrophilin-like molecule BTN3A1. Upon antigen recognition induces rapid, innate-like immune responses involved in pathogen clearance and tissue repair. Binding of gamma-delta TR complex to antigen triggers phosphorylation of immunoreceptor tyrosine-based activation motifs (ITAMs) in the CD3 chains by the LCK and FYN kinases, allowing the recruitment, phosphorylation, and activation of ZAP70 that facilitates phosphorylation of the scaffolding proteins LCP2 and LAT. This lead to the formation of a supramolecular signalosome that recruits the phospholipase PLCG1, resulting in calcium mobilization and ERK activation, ultimately leading to T cell expansion and differentiation into effector cells. Gamma-delta TRs are produced through somatic rearrangement of a limited repertoire of variable (V), diversity (D), and joining (J) genes. The potential diversity of gamma-delta TRs is conferred by the unique ability to rearrange (D) genes in tandem and to utilize all three reading frames. The combinatorial diversity is considerably increased by the sequence exonuclease trimming and random nucleotide (N) region additions which occur during the V-(D)-J rearrangements. The sequence is that of T cell receptor delta variable 2 from Homo sapiens (Human).